Reading from the N-terminus, the 619-residue chain is Dihydroxy-acid dehydratase (619 aa).

Position 81 (Asp-81) interacts with Mg(2+). Cys-122 is a binding site for [2Fe-2S] cluster. Asp-123 and Lys-124 together coordinate Mg(2+). Residue Lys-124 is modified to N6-carboxylysine. Residue Cys-201 participates in [2Fe-2S] cluster binding. Glu-496 is a Mg(2+) binding site. The Proton acceptor role is filled by Ser-522.

The protein belongs to the IlvD/Edd family. In terms of assembly, homodimer. It depends on [2Fe-2S] cluster as a cofactor. Mg(2+) serves as cofactor.

The enzyme catalyses (2R)-2,3-dihydroxy-3-methylbutanoate = 3-methyl-2-oxobutanoate + H2O. The catalysed reaction is (2R,3R)-2,3-dihydroxy-3-methylpentanoate = (S)-3-methyl-2-oxopentanoate + H2O. It participates in amino-acid biosynthesis; L-isoleucine biosynthesis; L-isoleucine from 2-oxobutanoate: step 3/4. The protein operates within amino-acid biosynthesis; L-valine biosynthesis; L-valine from pyruvate: step 3/4. Its function is as follows. Functions in the biosynthesis of branched-chain amino acids. Catalyzes the dehydration of (2R,3R)-2,3-dihydroxy-3-methylpentanoate (2,3-dihydroxy-3-methylvalerate) into 2-oxo-3-methylpentanoate (2-oxo-3-methylvalerate) and of (2R)-2,3-dihydroxy-3-methylbutanoate (2,3-dihydroxyisovalerate) into 2-oxo-3-methylbutanoate (2-oxoisovalerate), the penultimate precursor to L-isoleucine and L-valine, respectively. The polypeptide is Dihydroxy-acid dehydratase (Burkholderia vietnamiensis (strain G4 / LMG 22486) (Burkholderia cepacia (strain R1808))).